Here is a 377-residue protein sequence, read N- to C-terminus: Dual-specificity RNA methyltransferase RlmN (377 aa).

Glutamate 102 (proton acceptor) is an active-site residue. The Radical SAM core domain maps to 108–345; sequence EPDRRTLCVS…AVVRKNRGGD (238 aa). Cysteine 115 and cysteine 350 are oxidised to a cystine. Residues cysteine 122, cysteine 126, and cysteine 129 each contribute to the [4Fe-4S] cluster site. Residues 177-178, serine 209, 231-233, and asparagine 307 contribute to the S-adenosyl-L-methionine site; these read GE and SLN. Cysteine 350 functions as the S-methylcysteine intermediate in the catalytic mechanism. A disordered region spans residues 354–377; sequence AAEGGPGDPRRPAPPPLTRLPAAG.

It belongs to the radical SAM superfamily. RlmN family. [4Fe-4S] cluster serves as cofactor.

It is found in the cytoplasm. It catalyses the reaction adenosine(2503) in 23S rRNA + 2 reduced [2Fe-2S]-[ferredoxin] + 2 S-adenosyl-L-methionine = 2-methyladenosine(2503) in 23S rRNA + 5'-deoxyadenosine + L-methionine + 2 oxidized [2Fe-2S]-[ferredoxin] + S-adenosyl-L-homocysteine. The catalysed reaction is adenosine(37) in tRNA + 2 reduced [2Fe-2S]-[ferredoxin] + 2 S-adenosyl-L-methionine = 2-methyladenosine(37) in tRNA + 5'-deoxyadenosine + L-methionine + 2 oxidized [2Fe-2S]-[ferredoxin] + S-adenosyl-L-homocysteine. Functionally, specifically methylates position 2 of adenine 2503 in 23S rRNA and position 2 of adenine 37 in tRNAs. m2A2503 modification seems to play a crucial role in the proofreading step occurring at the peptidyl transferase center and thus would serve to optimize ribosomal fidelity. The polypeptide is Dual-specificity RNA methyltransferase RlmN (Anaeromyxobacter sp. (strain Fw109-5)).